A 436-amino-acid polypeptide reads, in one-letter code: GTPase Der (436 aa).

EngA-type G domains follow at residues 4 to 167 (PVVA…PEVE) and 174 to 350 (VRVA…EQRT). GTP is bound by residues 10 to 17 (GRPNVGKS), 57 to 61 (DTGGL), 120 to 123 (NKVD), 180 to 187 (GRPNVGKS), 227 to 231 (DTAGL), and 292 to 295 (NKWD). The 85-residue stretch at 351–435 (RRISTSEVND…PLRIILRRKN (85 aa)) folds into the KH-like domain.

It belongs to the TRAFAC class TrmE-Era-EngA-EngB-Septin-like GTPase superfamily. EngA (Der) GTPase family. As to quaternary structure, associates with the 50S ribosomal subunit.

GTPase that plays an essential role in the late steps of ribosome biogenesis. The polypeptide is GTPase Der (Gemmatimonas aurantiaca (strain DSM 14586 / JCM 11422 / NBRC 100505 / T-27)).